The chain runs to 119 residues: Ribosome-binding factor A (119 aa).

It belongs to the RbfA family. In terms of assembly, monomer. Binds 30S ribosomal subunits, but not 50S ribosomal subunits or 70S ribosomes.

It localises to the cytoplasm. Its function is as follows. One of several proteins that assist in the late maturation steps of the functional core of the 30S ribosomal subunit. Associates with free 30S ribosomal subunits (but not with 30S subunits that are part of 70S ribosomes or polysomes). Required for efficient processing of 16S rRNA. May interact with the 5'-terminal helix region of 16S rRNA. This chain is Ribosome-binding factor A, found in Ligilactobacillus salivarius (strain UCC118) (Lactobacillus salivarius).